The sequence spans 98 residues: MAIESINAASVLPKVTLGETAKTDNATGAGNTFTQMLDSMSDTQSNAQTSVSNLLTTGEGNASDVLIQMKKAESEMKTAAVIRDNVIESYKQLLNMQV.

A disordered region spans residues 22 to 56; it reads KTDNATGAGNTFTQMLDSMSDTQSNAQTSVSNLLT. The segment covering 23–56 has biased composition (polar residues); sequence TDNATGAGNTFTQMLDSMSDTQSNAQTSVSNLLT.

This sequence belongs to the FliE family.

It is found in the bacterial flagellum basal body. This chain is Flagellar hook-basal body complex protein FliE, found in Listeria innocua serovar 6a (strain ATCC BAA-680 / CLIP 11262).